A 165-amino-acid chain; its full sequence is Putative 1,2-phenylacetyl-CoA epoxidase, subunit D (165 aa).

As to quaternary structure, monomer.

It participates in aromatic compound metabolism; phenylacetate degradation. In terms of biological role, possible component of 1,2-phenylacetyl-CoA epoxidase multicomponent enzyme system which catalyzes the reduction of phenylacetyl-CoA (PA-CoA) to form 1,2-epoxyphenylacetyl-CoA. The subunit D may have a function related to the maturation of the monooxygenase complex, rather than direct involvement in catalysis. PaaD could assist either in maturation of PaaE or PaaA. The sequence is that of Putative 1,2-phenylacetyl-CoA epoxidase, subunit D (paaD) from Escherichia coli (strain K12).